The chain runs to 131 residues: Large ribosomal subunit protein uL22 (131 aa).

Belongs to the universal ribosomal protein uL22 family. In terms of assembly, part of the 50S ribosomal subunit.

Functionally, this protein binds specifically to 23S rRNA; its binding is stimulated by other ribosomal proteins, e.g. L4, L17, and L20. It is important during the early stages of 50S assembly. It makes multiple contacts with different domains of the 23S rRNA in the assembled 50S subunit and ribosome. The globular domain of the protein is located near the polypeptide exit tunnel on the outside of the subunit, while an extended beta-hairpin is found that lines the wall of the exit tunnel in the center of the 70S ribosome. The protein is Large ribosomal subunit protein uL22 of Phytoplasma mali (strain AT).